A 470-amino-acid polypeptide reads, in one-letter code: MSKIVKQEENFSKWYTSIIENANLVDYGLVKGTIMFKPYGFAIWKRIQEEFNKILVSLNTAEVCFPMLIPYSEFMKEKEHVEGFNPELFKVSHLGEKKLEDELVIRPTSEISFCNYFKKNIKSYNDLPCILNQWGSVFRVEKNTRPFLRTSEFLWQEQHAVFADKKEAFDFSITMVNEYKKFVNDYLSIAVLMGEKTENERFAGADNTFTIEALMPDGQVLQSATSHYLGTNFAKSYDLKYQTKNNNYDLMFQTSAGLSTRIIGAIIMSHSDNNGLVLPFKIAPIQFAIVTSNEVNKDSDELKAIYKNLFGYKYQTYFVEKSLGLQLQENEIKGIPFQLILGKKEIENNTITIYRRDTREKQNISFKEFNQNFIENLIKEYSSNLFNKTEKRLNSSIEFVNNIDEFKKALDNKKIISAYWSGNAEDEKKLKELTTATPRCFDWNQKIDKTKKCFFTNKPNAKLVYFARAY.

It belongs to the class-II aminoacyl-tRNA synthetase family. ProS type 3 subfamily. In terms of assembly, homodimer.

Its subcellular location is the cytoplasm. It catalyses the reaction tRNA(Pro) + L-proline + ATP = L-prolyl-tRNA(Pro) + AMP + diphosphate. In terms of biological role, catalyzes the attachment of proline to tRNA(Pro) in a two-step reaction: proline is first activated by ATP to form Pro-AMP and then transferred to the acceptor end of tRNA(Pro). The polypeptide is Proline--tRNA ligase (Malacoplasma penetrans (strain HF-2) (Mycoplasma penetrans)).